Reading from the N-terminus, the 329-residue chain is DNA-directed RNA polymerase subunit alpha (329 aa).

Residues 1–235 form an alpha N-terminal domain (alpha-NTD) region; the sequence is MQGSVTEFLK…EQLDAFVDLR (235 aa). The segment at 249 to 329 is alpha C-terminal domain (alpha-CTD); it reads FDPILLRPVD…NWPPASIAED (81 aa).

The protein belongs to the RNA polymerase alpha chain family. Homodimer. The RNAP catalytic core consists of 2 alpha, 1 beta, 1 beta' and 1 omega subunit. When a sigma factor is associated with the core the holoenzyme is formed, which can initiate transcription.

It catalyses the reaction RNA(n) + a ribonucleoside 5'-triphosphate = RNA(n+1) + diphosphate. Functionally, DNA-dependent RNA polymerase catalyzes the transcription of DNA into RNA using the four ribonucleoside triphosphates as substrates. The polypeptide is DNA-directed RNA polymerase subunit alpha (Aliivibrio fischeri (strain ATCC 700601 / ES114) (Vibrio fischeri)).